The primary structure comprises 243 residues: Small ribosomal subunit protein eS4 (243 aa).

The region spanning 43 to 105 (IPLLYIVRDY…TGEHYRVLPN (63 aa)) is the S4 RNA-binding domain.

It belongs to the eukaryotic ribosomal protein eS4 family.

The sequence is that of Small ribosomal subunit protein eS4 (rps4e) from Pyrococcus horikoshii (strain ATCC 700860 / DSM 12428 / JCM 9974 / NBRC 100139 / OT-3).